We begin with the raw amino-acid sequence, 496 residues long: Probable fatty acyl-CoA reductase 5 (496 aa).

Belongs to the fatty acyl-CoA reductase family. As to expression, expressed in the endodermal cell layer surrounding the central vasculature in roots. Expressed in floral organs of very young unopened buds and receptacle of siliques.

The catalysed reaction is a long-chain fatty acyl-CoA + 2 NADPH + 2 H(+) = a long-chain primary fatty alcohol + 2 NADP(+) + CoA. In terms of biological role, catalyzes the reduction of fatty acyl-CoA to fatty alcohols. Catalyzes specifically the formation of C18:0 fatty alcohol. Provides the fatty alcohols required for synthesis of suberin in roots, seed coat and wound-induced leaf tissue. Provides the fatty alcohols required for synthesis of alkyl hydroxycinnamates in root waxes. This is Probable fatty acyl-CoA reductase 5 from Arabidopsis thaliana (Mouse-ear cress).